A 398-amino-acid polypeptide reads, in one-letter code: Transcription termination factor 1, mitochondrial (398 aa).

Residues 1-57 (MQSLSLGQTSISKGLNYLTIMAPGNLWHMRNNFLFGSRCWMTRFSAENIFKSVSFRL) constitute a mitochondrion transit peptide. Interaction with DNA regions lie at residues 169 to 170 (RS), 246 to 250 (QSTKR), 323 to 330 (AEKKFNDK), 354 to 357 (SIST), and 383 to 390 (SKKRYEAK).

The protein belongs to the mTERF family. Monomer. In terms of processing, phosphoprotein with mostly four phosphate groups. While the DNA-binding activity is unaffected by the phosphorylation state, only the phosphorylated form of the protein is active for termination activity. Functioning seems to be regulated by phosphorylation.

The protein resides in the mitochondrion. Functionally, transcription termination factor. Binds to a 28 bp region within the tRNA(Leu(uur)) gene at a position immediately adjacent to and downstream of the 16S rRNA gene; this region comprises a tridecamer sequence critical for directing accurate termination. Binds DNA along the major grove and promotes DNA bending and partial unwinding. Promotes base flipping. Transcription termination activity appears to be polarized with highest specificity for transcripts initiated on the light strand. This chain is Transcription termination factor 1, mitochondrial (MTERF1), found in Pongo abelii (Sumatran orangutan).